The primary structure comprises 275 residues: Large ribosomal subunit protein uL2 (275 aa).

The disordered stretch occupies residues 223–275 (VVMNPVDHPHGGGEGKSSGGRHPVSPWGMPTKGYKTRKNKGTDQYIVRRRNKK).

Belongs to the universal ribosomal protein uL2 family. Part of the 50S ribosomal subunit. Forms a bridge to the 30S subunit in the 70S ribosome.

Its function is as follows. One of the primary rRNA binding proteins. Required for association of the 30S and 50S subunits to form the 70S ribosome, for tRNA binding and peptide bond formation. It has been suggested to have peptidyltransferase activity; this is somewhat controversial. Makes several contacts with the 16S rRNA in the 70S ribosome. The sequence is that of Large ribosomal subunit protein uL2 from Psychromonas ingrahamii (strain DSM 17664 / CCUG 51855 / 37).